The sequence spans 194 residues: dCTP deaminase (194 aa).

DCTP-binding positions include 110–115, aspartate 128, 136–138, tyrosine 171, lysine 178, and glutamine 182; these read RSSLAR and VLE. Glutamate 138 acts as the Proton donor/acceptor in catalysis.

It belongs to the dCTP deaminase family. In terms of assembly, homotrimer.

The catalysed reaction is dCTP + H2O + H(+) = dUTP + NH4(+). The protein operates within pyrimidine metabolism; dUMP biosynthesis; dUMP from dCTP (dUTP route): step 1/2. Functionally, catalyzes the deamination of dCTP to dUTP. The chain is dCTP deaminase from Pseudoalteromonas translucida (strain TAC 125).